The sequence spans 241 residues: tRNA pseudouridine synthase B (241 aa).

Asp-45 (nucleophile) is an active-site residue.

This sequence belongs to the pseudouridine synthase TruB family. Type 1 subfamily.

The catalysed reaction is uridine(55) in tRNA = pseudouridine(55) in tRNA. Responsible for synthesis of pseudouridine from uracil-55 in the psi GC loop of transfer RNAs. The chain is tRNA pseudouridine synthase B from Opitutus terrae (strain DSM 11246 / JCM 15787 / PB90-1).